The sequence spans 1388 residues: Rho-associated protein kinase 2 (1388 aa).

The segment at 1–24 is disordered; sequence MSRPPPTGKMPGAPEAVSGDGAGA. Positions 92-354 constitute a Protein kinase domain; sequence YDVVKVIGRG…VEEIKQHPFF (263 aa). Residues 98 to 106 and Lys121 each bind ATP; that span reads IGRGAFGEV. The active-site Proton acceptor is Asp214. The region spanning 357-425 is the AGC-kinase C-terminal domain; the sequence is DQWNWDNIRE…YRENLLLSDS (69 aa). Residues 363-784 are interaction with PPP1R12A; the sequence is NIRETAAPVV…INELLKQKDV (422 aa). The interval 373-420 is interaction with NPM1; sequence PELSSDIDSSNFDDIEDDKGDVETFPIPKAFVGNQLPFIGFTYYRENL. Thr414 bears the Phosphothreonine; by ROCK2 mark. 2 coiled-coil regions span residues 439-1025 and 1053-1131; these read NEES…KQLL and DTDV…IGLD. In terms of domain architecture, REM-1 spans 497–573; sequence TLRQLEREKA…LDETNALLRT (77 aa). Positions 512–530 are enriched in basic and acidic residues; the sequence is NAEYQRKADHEADKKRNLE. Residues 512-532 are disordered; that stretch reads NAEYQRKADHEADKKRNLEND. At Tyr722 the chain carries Phosphotyrosine; by SRC. Residues 979 to 1047 form the RhoBD domain; that stretch reads TSDVANLANE…LAEIMNRKEP (69 aa). The RHOA binding stretch occupies residues 979–1047; that stretch reads TSDVANLANE…LAEIMNRKEP (69 aa). A Phosphoserine modification is found at Ser1137. Positions 1150–1349 constitute a PH domain; sequence ESRLEGWLSL…WVSRLVKKIP (200 aa). Thr1212 carries the phosphothreonine modification. The Phorbol-ester/DAG-type zinc finger occupies 1260–1315; it reads GHEFIPTLYHFPTNCEACMKPLWHMFKPPPALECRRCHIKCHKDHMDKKEEIIAPC. Residues 1345–1388 are disordered; sequence VKKIPKKPPAPDPFARSSPRTSMKIQQNQSIRRPSRQLAPNKPS. 2 positions are modified to phosphoserine: Ser1362 and Ser1374. Residues 1362–1376 show a composition bias toward polar residues; the sequence is SPRTSMKIQQNQSIR.

It belongs to the protein kinase superfamily. AGC Ser/Thr protein kinase family. In terms of assembly, homodimer. Interacts with IRS1. Interacts with RAF1. Interacts with RHOA (activated by GTP). Interacts with RHOB and RHOC. Interacts with PPP1R12A. Interacts with EP300. Interacts with CHORDC1. Interacts with BRCA2. Interacts with NPM1; this interaction enhances ROCK2 activity. Interacts with SORL1. Interacts with PJVK. The cofactor is Mg(2+). Post-translationally, autophosphorylated. Phosphorylation at Tyr-722 reduces its binding to RHOA and is crucial for focal adhesion dynamics. Dephosphorylation by PTPN11 stimulates its RHOA binding activity. Cleaved by granzyme B during apoptosis. This leads to constitutive activation of the kinase and membrane blebbing. Highly expressed in whole brain and in cerebellum, and at lower levels in heart and lung. Detected at low levels in skeletal muscle, spleen, liver, kidney and pancreas.

It localises to the cytoplasm. It is found in the cell membrane. The protein localises to the nucleus. Its subcellular location is the cytoskeleton. The protein resides in the microtubule organizing center. It localises to the centrosome. It carries out the reaction L-seryl-[protein] + ATP = O-phospho-L-seryl-[protein] + ADP + H(+). The catalysed reaction is L-threonyl-[protein] + ATP = O-phospho-L-threonyl-[protein] + ADP + H(+). With respect to regulation, activated by RHOA binding. Inhibited by Y-27632. Protein kinase which is a key regulator of actin cytoskeleton and cell polarity. Involved in regulation of smooth muscle contraction, actin cytoskeleton organization, stress fiber and focal adhesion formation, neurite retraction, cell adhesion and motility via phosphorylation of ADD1, BRCA2, CNN1, EZR, DPYSL2, EP300, MSN, MYL9/MLC2, NPM1, RDX, PPP1R12A and VIM. Phosphorylates SORL1 and IRF4. Acts as a negative regulator of VEGF-induced angiogenic endothelial cell activation. Positively regulates the activation of p42/MAPK1-p44/MAPK3 and of p90RSK/RPS6KA1 during myogenic differentiation. Plays an important role in the timely initiation of centrosome duplication. Inhibits keratinocyte terminal differentiation. May regulate closure of the eyelids and ventral body wall through organization of actomyosin bundles. Plays a critical role in the regulation of spine and synaptic properties in the hippocampus. Plays an important role in generating the circadian rhythm of the aortic myofilament Ca(2+) sensitivity and vascular contractility by modulating the myosin light chain phosphorylation. This chain is Rho-associated protein kinase 2 (ROCK2), found in Bos taurus (Bovine).